Consider the following 161-residue polypeptide: Small ribosomal subunit protein uS9 (161 aa).

Residues 1 to 38 (MAQTITSLADLKQGPGAEPAGLSAEPQEPKLDKEGRAY) are disordered. Over residues 27–38 (QEPKLDKEGRAY) the composition is skewed to basic and acidic residues.

Belongs to the universal ribosomal protein uS9 family.

This is Small ribosomal subunit protein uS9 from Rhodospirillum centenum (strain ATCC 51521 / SW).